The sequence spans 338 residues: Tagatose 1,6-diphosphate aldolase (338 aa).

The protein belongs to the aldolase LacD family.

It catalyses the reaction D-tagatofuranose 1,6-bisphosphate = D-glyceraldehyde 3-phosphate + dihydroxyacetone phosphate. It functions in the pathway carbohydrate metabolism; D-tagatose 6-phosphate degradation; D-glyceraldehyde 3-phosphate and glycerone phosphate from D-tagatose 6-phosphate: step 2/2. This chain is Tagatose 1,6-diphosphate aldolase, found in Listeria monocytogenes serovar 1/2a (strain ATCC BAA-679 / EGD-e).